A 264-amino-acid polypeptide reads, in one-letter code: tRNA pseudouridine synthase A (264 aa).

Asp51 (nucleophile) is an active-site residue. Position 109 (Tyr109) interacts with substrate.

The protein belongs to the tRNA pseudouridine synthase TruA family. In terms of assembly, homodimer.

It carries out the reaction uridine(38/39/40) in tRNA = pseudouridine(38/39/40) in tRNA. Its function is as follows. Formation of pseudouridine at positions 38, 39 and 40 in the anticodon stem and loop of transfer RNAs. The polypeptide is tRNA pseudouridine synthase A (Actinobacillus succinogenes (strain ATCC 55618 / DSM 22257 / CCUG 43843 / 130Z)).